A 345-amino-acid chain; its full sequence is S-adenosylmethionine:tRNA ribosyltransferase-isomerase (345 aa).

Belongs to the QueA family. Monomer.

The protein resides in the cytoplasm. It catalyses the reaction 7-aminomethyl-7-carbaguanosine(34) in tRNA + S-adenosyl-L-methionine = epoxyqueuosine(34) in tRNA + adenine + L-methionine + 2 H(+). The protein operates within tRNA modification; tRNA-queuosine biosynthesis. Functionally, transfers and isomerizes the ribose moiety from AdoMet to the 7-aminomethyl group of 7-deazaguanine (preQ1-tRNA) to give epoxyqueuosine (oQ-tRNA). In Rhodospirillum rubrum (strain ATCC 11170 / ATH 1.1.1 / DSM 467 / LMG 4362 / NCIMB 8255 / S1), this protein is S-adenosylmethionine:tRNA ribosyltransferase-isomerase.